The following is a 340-amino-acid chain: 4-hydroxy-2-oxovalerate aldolase (340 aa).

The region spanning 8-260 (VILHDMSLRD…HHGVNLYDIM (253 aa)) is the Pyruvate carboxyltransferase domain. 16 to 17 (RD) contacts substrate. D17 contacts Mn(2+). The active-site Proton acceptor is the H20. Substrate is bound by residues S170 and H199. Mn(2+)-binding residues include H199 and H201. Position 290 (Y290) interacts with substrate.

It belongs to the 4-hydroxy-2-oxovalerate aldolase family.

It catalyses the reaction (S)-4-hydroxy-2-oxopentanoate = acetaldehyde + pyruvate. The protein is 4-hydroxy-2-oxovalerate aldolase of Shewanella halifaxensis (strain HAW-EB4).